A 588-amino-acid chain; its full sequence is Intracellular maltogenic amylase (588 aa).

4 residues coordinate Ca(2+): Asn-149, Ser-155, Gly-174, and Asp-176. Positions 249 and 325 each coordinate substrate. Asp-327 (nucleophile) is an active-site residue. Glu-356 (proton donor) is an active-site residue. Substrate is bound by residues 422–423 (HD), Asp-467, and Arg-471.

The protein belongs to the glycosyl hydrolase 13 family. BbmA subfamily. Monomer or homodimer; in equilibrium. It depends on Ca(2+) as a cofactor.

The protein localises to the cytoplasm. Functionally, hydrolyzes beta-cyclodextrin to maltose and glucose, soluble starch to maltose and glucose, and pullulan to panose with trace amounts of maltose and glucose. It is also able to hydrolyze acarbose. Can also exhibit a transglycosylation activity transferring glucose or maltose to another moiety of sugars by forming alpha-(1,6)- and alpha-(1,3)-glycosidic linkages upon the hydrolysis of substrate at concentrations of 5% or higher. The sequence is that of Intracellular maltogenic amylase (bbmA) from Bacillus subtilis (strain 168).